The sequence spans 151 residues: Deoxyuridine 5'-triphosphate nucleotidohydrolase (151 aa).

Residues 70–72 (RSG), N83, 87–89 (LID), and M97 contribute to the substrate site.

It belongs to the dUTPase family. Mg(2+) is required as a cofactor.

The catalysed reaction is dUTP + H2O = dUMP + diphosphate + H(+). Its pathway is pyrimidine metabolism; dUMP biosynthesis; dUMP from dCTP (dUTP route): step 2/2. Functionally, this enzyme is involved in nucleotide metabolism: it produces dUMP, the immediate precursor of thymidine nucleotides and it decreases the intracellular concentration of dUTP so that uracil cannot be incorporated into DNA. The polypeptide is Deoxyuridine 5'-triphosphate nucleotidohydrolase (Yersinia enterocolitica serotype O:8 / biotype 1B (strain NCTC 13174 / 8081)).